The chain runs to 280 residues: MAIRKYKPTTSGRRGASVSDFTDITRTKPEKALMRSLHGHGGRNVHGRITTRHKGGGHKRAYRLIDFRRNDTDGVNAKVAHIEYDPNRTANIALLHFLDGKKRYILAPQGLSQGDVVESGANADIKPGNNLPLRNIPAGTLIHAVELRPGGGAKLARSAGSSIQLLGKESSYASLRMPSGEIRRVDVRCRATVGEVGNAEQANINWGKAGRMRWKGKRPSVRGVVMNPVDHPHGGGEGKTSGGRHPVSPWGKPEGRTRKPNKSSNKLIVRRRRTGKKHAR.

Residues 213-280 (RWKGKRPSVR…RRRTGKKHAR (68 aa)) form a disordered region. Residues 268-280 (IVRRRRTGKKHAR) show a composition bias toward basic residues.

The protein belongs to the universal ribosomal protein uL2 family. As to quaternary structure, part of the 50S ribosomal subunit. Forms a bridge to the 30S subunit in the 70S ribosome.

In terms of biological role, one of the primary rRNA binding proteins. Required for association of the 30S and 50S subunits to form the 70S ribosome, for tRNA binding and peptide bond formation. It has been suggested to have peptidyltransferase activity; this is somewhat controversial. Makes several contacts with the 16S rRNA in the 70S ribosome. This Mycobacterium leprae (strain Br4923) protein is Large ribosomal subunit protein uL2.